The sequence spans 165 residues: RNA pyrophosphohydrolase (165 aa).

The Nudix hydrolase domain occupies 6-149 (GYRPNVGIII…KQSVYHQALT (144 aa)). The Nudix box motif lies at 38–59 (GGVRENETPQQAVFRELKEEVG).

This sequence belongs to the Nudix hydrolase family. RppH subfamily. It depends on a divalent metal cation as a cofactor.

In terms of biological role, accelerates the degradation of transcripts by removing pyrophosphate from the 5'-end of triphosphorylated RNA, leading to a more labile monophosphorylated state that can stimulate subsequent ribonuclease cleavage. In Hydrogenovibrio crunogenus (strain DSM 25203 / XCL-2) (Thiomicrospira crunogena), this protein is RNA pyrophosphohydrolase.